Here is a 249-residue protein sequence, read N- to C-terminus: Caffeoyl-CoA O-methyltransferase (249 aa).

Lysine 21 provides a ligand contact to substrate. S-adenosyl-L-methionine is bound by residues threonine 63, glutamate 85, 87 to 88, serine 93, aspartate 111, and alanine 140; that span reads GV. Substrate is bound at residue aspartate 162. Residue aspartate 162 participates in a divalent metal cation binding. Aspartate 164 lines the S-adenosyl-L-methionine pocket. Aspartate 188 and asparagine 189 together coordinate a divalent metal cation. Asparagine 193 is a substrate binding site.

Belongs to the class I-like SAM-binding methyltransferase superfamily. Cation-dependent O-methyltransferase family. CCoAMT subfamily. As to quaternary structure, homodimer. The cofactor is a divalent metal cation.

It catalyses the reaction (E)-caffeoyl-CoA + S-adenosyl-L-methionine = (E)-feruloyl-CoA + S-adenosyl-L-homocysteine + H(+). The protein operates within aromatic compound metabolism; phenylpropanoid biosynthesis. In terms of biological role, methylates caffeoyl-CoA to feruloyl-CoA and 5-hydroxyferuloyl-CoA to sinapoyl-CoA. Plays a role in the synthesis of feruloylated polysaccharides. Involved in the reinforcement of the plant cell wall. Also involved in the responding to wounding or pathogen challenge by the increased formation of cell wall-bound ferulic acid polymers. This chain is Caffeoyl-CoA O-methyltransferase, found in Eucalyptus gunnii (Cider gum).